The following is a 340-amino-acid chain: GTPase Obg (340 aa).

The 161-residue stretch at 1-161 folds into the Obg domain; sequence MKFVDMTNIT…QHLLLELLLI (161 aa). In terms of domain architecture, OBG-type G spans 162-335; that stretch reads ANVGIFGLPN…LCNSIMKFIM (174 aa). Residues 168 to 175, 193 to 197, 215 to 218, 285 to 288, and 316 to 318 contribute to the GTP site; these read GLPNSGKS, FTTLV, DIPG, NKID, and SSI. Mg(2+)-binding residues include S175 and T195.

This sequence belongs to the TRAFAC class OBG-HflX-like GTPase superfamily. OBG GTPase family. In terms of assembly, monomer. Requires Mg(2+) as cofactor.

The protein localises to the cytoplasm. Functionally, an essential GTPase which binds GTP, GDP and possibly (p)ppGpp with moderate affinity, with high nucleotide exchange rates and a fairly low GTP hydrolysis rate. Plays a role in control of the cell cycle, stress response, ribosome biogenesis and in those bacteria that undergo differentiation, in morphogenesis control. In Blochmanniella pennsylvanica (strain BPEN), this protein is GTPase Obg.